The primary structure comprises 387 residues: 3-ketoacyl-CoA thiolase (387 aa).

Residue cysteine 91 is the Acyl-thioester intermediate of the active site. Residues histidine 343 and cysteine 373 each act as proton acceptor in the active site.

Belongs to the thiolase-like superfamily. Thiolase family. Heterotetramer of two alpha chains (FadB) and two beta chains (FadA).

The protein localises to the cytoplasm. It carries out the reaction an acyl-CoA + acetyl-CoA = a 3-oxoacyl-CoA + CoA. Its pathway is lipid metabolism; fatty acid beta-oxidation. Catalyzes the final step of fatty acid oxidation in which acetyl-CoA is released and the CoA ester of a fatty acid two carbons shorter is formed. The protein is 3-ketoacyl-CoA thiolase of Shigella dysenteriae serotype 1 (strain Sd197).